Consider the following 767-residue polypeptide: Phosphoribosylformylglycinamidine synthase subunit PurL (767 aa).

His-65 is an active-site residue. ATP is bound by residues Tyr-68 and Lys-112. Position 114 (Glu-114) interacts with Mg(2+). Residues 115–118 and Arg-137 contribute to the substrate site; that span reads SHNH. The active-site Proton acceptor is the His-116. Asp-138 is a Mg(2+) binding site. Residue Gln-262 coordinates substrate. Position 290 (Asp-290) interacts with Mg(2+). 334 to 336 provides a ligand contact to substrate; that stretch reads ESQ. Asp-522 and Gly-559 together coordinate ATP. Asn-560 lines the Mg(2+) pocket. Residue Ser-562 participates in substrate binding.

The protein belongs to the FGAMS family. In terms of assembly, monomer. Part of the FGAM synthase complex composed of 1 PurL, 1 PurQ and 2 PurS subunits.

It localises to the cytoplasm. The enzyme catalyses N(2)-formyl-N(1)-(5-phospho-beta-D-ribosyl)glycinamide + L-glutamine + ATP + H2O = 2-formamido-N(1)-(5-O-phospho-beta-D-ribosyl)acetamidine + L-glutamate + ADP + phosphate + H(+). Its pathway is purine metabolism; IMP biosynthesis via de novo pathway; 5-amino-1-(5-phospho-D-ribosyl)imidazole from N(2)-formyl-N(1)-(5-phospho-D-ribosyl)glycinamide: step 1/2. Its function is as follows. Part of the phosphoribosylformylglycinamidine synthase complex involved in the purines biosynthetic pathway. Catalyzes the ATP-dependent conversion of formylglycinamide ribonucleotide (FGAR) and glutamine to yield formylglycinamidine ribonucleotide (FGAM) and glutamate. The FGAM synthase complex is composed of three subunits. PurQ produces an ammonia molecule by converting glutamine to glutamate. PurL transfers the ammonia molecule to FGAR to form FGAM in an ATP-dependent manner. PurS interacts with PurQ and PurL and is thought to assist in the transfer of the ammonia molecule from PurQ to PurL. The protein is Phosphoribosylformylglycinamidine synthase subunit PurL of Renibacterium salmoninarum (strain ATCC 33209 / DSM 20767 / JCM 11484 / NBRC 15589 / NCIMB 2235).